Consider the following 367-residue polypeptide: Histidinol-phosphate aminotransferase (367 aa).

An N6-(pyridoxal phosphate)lysine modification is found at K222.

This sequence belongs to the class-II pyridoxal-phosphate-dependent aminotransferase family. Histidinol-phosphate aminotransferase subfamily. Requires pyridoxal 5'-phosphate as cofactor.

It catalyses the reaction L-histidinol phosphate + 2-oxoglutarate = 3-(imidazol-4-yl)-2-oxopropyl phosphate + L-glutamate. Its pathway is amino-acid biosynthesis; L-histidine biosynthesis; L-histidine from 5-phospho-alpha-D-ribose 1-diphosphate: step 7/9. The chain is Histidinol-phosphate aminotransferase from Methanosphaera stadtmanae (strain ATCC 43021 / DSM 3091 / JCM 11832 / MCB-3).